The chain runs to 351 residues: Glycerol-1-phosphate dehydrogenase [NAD(P)+] (351 aa).

Residues 97–101 (GKVID) and 119–122 (TSPS) contribute to the NAD(+) site. Aspartate 124 contacts substrate. Serine 128 lines the NAD(+) pocket. Residue aspartate 171 coordinates substrate. 2 residues coordinate Zn(2+): aspartate 171 and histidine 251. A substrate-binding site is contributed by histidine 255. Histidine 267 contributes to the Zn(2+) binding site.

This sequence belongs to the glycerol-1-phosphate dehydrogenase family. As to quaternary structure, homodimer. The cofactor is Zn(2+).

Its subcellular location is the cytoplasm. It catalyses the reaction sn-glycerol 1-phosphate + NAD(+) = dihydroxyacetone phosphate + NADH + H(+). It carries out the reaction sn-glycerol 1-phosphate + NADP(+) = dihydroxyacetone phosphate + NADPH + H(+). Its pathway is membrane lipid metabolism; glycerophospholipid metabolism. Its function is as follows. Catalyzes the NAD(P)H-dependent reduction of dihydroxyacetonephosphate (DHAP or glycerone phosphate) to glycerol 1-phosphate (G1P). The G1P thus generated is used as the glycerophosphate backbone of phospholipids in the cellular membranes of Archaea. This is Glycerol-1-phosphate dehydrogenase [NAD(P)+] from Saccharolobus solfataricus (strain ATCC 35092 / DSM 1617 / JCM 11322 / P2) (Sulfolobus solfataricus).